Consider the following 479-residue polypeptide: Ribosomal RNA small subunit methyltransferase F (479 aa).

S-adenosyl-L-methionine-binding positions include 125–131 (AAAPGSK), E149, D176, and D194. The Nucleophile role is filled by C247.

It belongs to the class I-like SAM-binding methyltransferase superfamily. RsmB/NOP family.

Its subcellular location is the cytoplasm. The enzyme catalyses cytidine(1407) in 16S rRNA + S-adenosyl-L-methionine = 5-methylcytidine(1407) in 16S rRNA + S-adenosyl-L-homocysteine + H(+). Specifically methylates the cytosine at position 1407 (m5C1407) of 16S rRNA. The chain is Ribosomal RNA small subunit methyltransferase F from Escherichia coli O127:H6 (strain E2348/69 / EPEC).